Here is a 146-residue protein sequence, read N- to C-terminus: Large ribosomal subunit protein uL16c (146 aa).

It belongs to the universal ribosomal protein uL16 family. Part of the 50S ribosomal subunit.

The protein localises to the plastid. It is found in the chloroplast. The chain is Large ribosomal subunit protein uL16c from Angiopteris evecta (Mule's foot fern).